Here is a 734-residue protein sequence, read N- to C-terminus: Photosystem I P700 chlorophyll a apoprotein A2 (734 aa).

8 helical membrane-spanning segments follow: residues 46–69, 135–158, 175–199, 273–291, 330–353, 369–395, 417–439, and 517–535; these read IFASHFGQLAIIFLWTSGNLFHVA, LYTGAIFLLAVAALFLLASWLHLQ, LNHHLSGLFGVSSLAWTGHLIHVAI, MAHHHLAIAVVFIIAGHMY, LHFQLGLALAALGVITSLVAQHMY, AALYTHHQYIAGFIMAGAFAHGAIFFL, AIISHLSWASLFLGFHTLGLYVH, and FLVHHAIALGLHTTTLILV. The [4Fe-4S] cluster site is built by C559 and C568. A run of 2 helical transmembrane segments spans residues 575-596 and 643-665; these read AFYLAVFWMLNTIGWVTFYWHW and LSVWAWMFLFGHLVWATGFMFLI. The chlorophyll a site is built by H654, M662, and Y670. Residue W671 participates in phylloquinone binding. The chain crosses the membrane as a helical span at residues 707–727; it reads LVGLAHFSVGYIFTYAAFLIA.

Belongs to the PsaA/PsaB family. As to quaternary structure, the PsaA/B heterodimer binds the P700 chlorophyll special pair and subsequent electron acceptors. PSI consists of a core antenna complex that captures photons, and an electron transfer chain that converts photonic excitation into a charge separation. The eukaryotic PSI reaction center is composed of at least 11 subunits. P700 is a chlorophyll a/chlorophyll a' dimer, A0 is one or more chlorophyll a, A1 is one or both phylloquinones and FX is a shared 4Fe-4S iron-sulfur center. is required as a cofactor.

It localises to the plastid. Its subcellular location is the chloroplast thylakoid membrane. The enzyme catalyses reduced [plastocyanin] + hnu + oxidized [2Fe-2S]-[ferredoxin] = oxidized [plastocyanin] + reduced [2Fe-2S]-[ferredoxin]. Functionally, psaA and PsaB bind P700, the primary electron donor of photosystem I (PSI), as well as the electron acceptors A0, A1 and FX. PSI is a plastocyanin-ferredoxin oxidoreductase, converting photonic excitation into a charge separation, which transfers an electron from the donor P700 chlorophyll pair to the spectroscopically characterized acceptors A0, A1, FX, FA and FB in turn. Oxidized P700 is reduced on the lumenal side of the thylakoid membrane by plastocyanin. In Adiantum capillus-veneris (Maidenhair fern), this protein is Photosystem I P700 chlorophyll a apoprotein A2.